Here is a 466-residue protein sequence, read N- to C-terminus: Purple acid phosphatase 6 (466 aa).

A signal peptide spans 1–20 (MKNLVIFAFLFLSITTVING). A glycan (N-linked (GlcNAc...) asparagine) is linked at N88. D164 provides a ligand contact to Fe cation. N172 carries N-linked (GlcNAc...) asparagine glycosylation. 2 residues coordinate Fe cation: D192 and Y195. Residue D192 coordinates Zn(2+). The Zn(2+) site is built by N229 and H314. N229 serves as a coordination point for substrate. Residue H324 is the Proton donor of the active site. H351 provides a ligand contact to Zn(2+). 351–353 (HVH) is a substrate binding site. A Fe cation-binding site is contributed by H353. 2 N-linked (GlcNAc...) asparagine glycosylation sites follow: N367 and N424.

The protein belongs to the metallophosphoesterase superfamily. Purple acid phosphatase family. Homodimer. The cofactor is Fe cation. It depends on Zn(2+) as a cofactor. As to expression, specifically expressed in flowers.

It is found in the secreted. The enzyme catalyses a phosphate monoester + H2O = an alcohol + phosphate. The sequence is that of Purple acid phosphatase 6 (PAP6) from Arabidopsis thaliana (Mouse-ear cress).